The following is a 314-amino-acid chain: Glutathione synthetase (314 aa).

Positions 125–311 constitute an ATP-grasp domain; it reads EKLAAQLFPQ…IAGQLFDAIE (187 aa). ATP is bound at residue 151–208; the sequence is FVQKQEQAILKPLDGMGGHSIFRSSNGDPNLNVILETLTDGGRTLAIAQRYLQQIIEG. Positions 282 and 284 each coordinate Mg(2+).

The protein belongs to the prokaryotic GSH synthase family. Mg(2+) is required as a cofactor. Requires Mn(2+) as cofactor.

It carries out the reaction gamma-L-glutamyl-L-cysteine + glycine + ATP = glutathione + ADP + phosphate + H(+). The protein operates within sulfur metabolism; glutathione biosynthesis; glutathione from L-cysteine and L-glutamate: step 2/2. This is Glutathione synthetase from Xylella fastidiosa (strain 9a5c).